Consider the following 271-residue polypeptide: MSDMRLIVAGAGGRMGRALIRAITETPGAVVAGALEAPTSALLGQDAGTLAGLPPSGVKLSADLWALSAEADGIVDFTVPEATIANVAIAAQRGMVHVIGTTGLTASDDAVISSVTSRATVVKSGNMSLGVNLLAALVKRVARSLDDGFDIEIVEMHHKAKIDAPSGTALLLGEAAAAGRGVALAEHSIRGRDGVTGARKAGDIGFASLRGGTVTGDHTVIFAGPYERIELTHKAEDRMIFAHGALKAALWARDQGPGLYSMADVLGLSDI.

NAD(+)-binding positions include 10 to 15, Glu36, 100 to 102, and 124 to 127; these read GAGGRM, GTT, and SGNM. His157 acts as the Proton donor/acceptor in catalysis. His158 is a binding site for (S)-2,3,4,5-tetrahydrodipicolinate. Lys161 acts as the Proton donor in catalysis. Residue 167–168 participates in (S)-2,3,4,5-tetrahydrodipicolinate binding; it reads GT.

This sequence belongs to the DapB family.

The protein localises to the cytoplasm. It catalyses the reaction (S)-2,3,4,5-tetrahydrodipicolinate + NAD(+) + H2O = (2S,4S)-4-hydroxy-2,3,4,5-tetrahydrodipicolinate + NADH + H(+). The enzyme catalyses (S)-2,3,4,5-tetrahydrodipicolinate + NADP(+) + H2O = (2S,4S)-4-hydroxy-2,3,4,5-tetrahydrodipicolinate + NADPH + H(+). The protein operates within amino-acid biosynthesis; L-lysine biosynthesis via DAP pathway; (S)-tetrahydrodipicolinate from L-aspartate: step 4/4. Its function is as follows. Catalyzes the conversion of 4-hydroxy-tetrahydrodipicolinate (HTPA) to tetrahydrodipicolinate. This is 4-hydroxy-tetrahydrodipicolinate reductase from Rhodopseudomonas palustris (strain BisB18).